Consider the following 209-residue polypeptide: Small ribosomal subunit protein uS3 (209 aa).

The 70-residue stretch at 38–107 (IRKVIKNKYA…RFIVNVEEIK (70 aa)) folds into the KH type-2 domain.

The protein belongs to the universal ribosomal protein uS3 family. In terms of assembly, part of the 30S ribosomal subunit. Forms a tight complex with proteins S10 and S14.

In terms of biological role, binds the lower part of the 30S subunit head. Binds mRNA in the 70S ribosome, positioning it for translation. The polypeptide is Small ribosomal subunit protein uS3 (Thermosipho africanus (strain TCF52B)).